Here is a 509-residue protein sequence, read N- to C-terminus: Dihydrolipoyl dehydrogenase, mitochondrial (509 aa).

The N-terminal 35 residues, 1–35 (MQSWSRVYRSLAKKGHFNRISHGLQGVSSVPLRTY), are a transit peptide targeting the mitochondrion. The residue at position 66 (K66) is an N6-acetyllysine; alternate. K66 carries the post-translational modification N6-succinyllysine; alternate. Residues 71–80 (EKNETLGGTC) and K89 each bind FAD. C80 and C85 are disulfide-bonded. N6-acetyllysine; alternate is present on residues K104, K122, K132, and K143. N6-succinyllysine; alternate occurs at positions 104, 122, 132, and 143. G154 contacts FAD. N6-succinyllysine is present on residues K159 and K166. FAD is bound at residue 183 to 185 (TGS). Residues 220–227 (GAGVIGVE) and E243 each bind NAD(+). 2 positions are modified to N6-succinyllysine: K273 and K277. V278 serves as a coordination point for NAD(+). Residues S285 and S297 each carry the phosphoserine modification. G314 lines the NAD(+) pocket. The residue at position 334 (K334) is an N6-acetyllysine; alternate. At K334 the chain carries N6-succinyllysine; alternate. K346 bears the N6-acetyllysine mark. FAD is bound by residues D355 and 361 to 364 (MLAH). K410 is modified (N6-acetyllysine; alternate). K410 is subject to N6-succinyllysine; alternate. Residues K417 and K420 each carry the N6-acetyllysine modification. At K430 the chain carries N6-succinyllysine. Residue H487 is the Proton acceptor of the active site. K505 carries the N6-acetyllysine; alternate modification. Residue K505 is modified to N6-succinyllysine; alternate.

This sequence belongs to the class-I pyridine nucleotide-disulfide oxidoreductase family. Homodimer. Part of the multimeric pyruvate dehydrogenase complex that contains multiple copies of pyruvate dehydrogenase (subunits PDHA (PDHA1 or PDHA2) and PDHB, E1), dihydrolipoamide acetyltransferase (DLAT, E2) and lipoamide dehydrogenase (DLD, E3). These subunits are bound to an inner core composed of about 48 DLAT and 12 PDHX molecules (by non covalent bonds). The 2-oxoglutarate dehydrogenase complex is composed of OGDH (2-oxoglutarate dehydrogenase; E1), DLST (dihydrolipoamide succinyltransferase; E2), DLD (dihydrolipoamide dehydrogenase; E3) and the assembly factor KGD4. It contains multiple copies of the three enzymatic components (E1, E2 and E3). In the nucleus, the 2-oxoglutarate dehydrogenase complex associates with KAT2A. Interacts with PDHX. FAD is required as a cofactor. Tyrosine phosphorylated. Expressed in liver (at protein level).

It localises to the mitochondrion matrix. It is found in the nucleus. The protein resides in the cell projection. The protein localises to the cilium. Its subcellular location is the flagellum. It localises to the cytoplasmic vesicle. It is found in the secretory vesicle. The protein resides in the acrosome. The enzyme catalyses N(6)-[(R)-dihydrolipoyl]-L-lysyl-[protein] + NAD(+) = N(6)-[(R)-lipoyl]-L-lysyl-[protein] + NADH + H(+). Its function is as follows. Lipoamide dehydrogenase is a component of the glycine cleavage system as well as an E3 component of three alpha-ketoacid dehydrogenase complexes (pyruvate-, alpha-ketoglutarate-, and branched-chain amino acid-dehydrogenase complex). The 2-oxoglutarate dehydrogenase complex is mainly active in the mitochondrion. A fraction of the 2-oxoglutarate dehydrogenase complex also localizes in the nucleus and is required for lysine succinylation of histones: associates with KAT2A on chromatin and provides succinyl-CoA to histone succinyltransferase KAT2A. In monomeric form may have additional moonlighting function as serine protease. Involved in the hyperactivation of spermatazoa during capacitation and in the spermatazoal acrosome reaction. The chain is Dihydrolipoyl dehydrogenase, mitochondrial (Dld) from Mus musculus (Mouse).